A 203-amino-acid chain; its full sequence is Synaptosomal-associated protein 25-B (203 aa).

Over residues 1–11 the composition is skewed to basic and acidic residues; the sequence is MADEADMRNEL. The disordered stretch occupies residues 1-25; it reads MADEADMRNELTDMQARADQLGDES. 2 consecutive t-SNARE coiled-coil homology domains span residues 19–81 and 137–199; these read DQLG…LTDL and DARE…ATKM.

It belongs to the SNAP-25 family.

It localises to the synapse. The protein localises to the synaptosome. It is found in the cell membrane. May play an important role in the synaptic function of specific neuronal systems. Associates with proteins involved in vesicle docking and membrane fusion. This chain is Synaptosomal-associated protein 25-B (snap25b), found in Carassius auratus (Goldfish).